We begin with the raw amino-acid sequence, 584 residues long: Cytochrome c oxidase subunit 1 (584 aa).

The disordered stretch occupies residues Met1–Lys25. Residues Ile43–Ile63 form a helical membrane-spanning segment. His87 is a Fe(II)-heme a binding site. The next 6 helical transmembrane spans lie at Val90–Leu110, Leu122–Leu142, Met171–Leu191, Ile214–Gly234, Leu259–Val279, and Phe292–Trp312. 2 residues coordinate Cu cation: His265 and Tyr269. Positions His265–Tyr269 form a cross-link, 1'-histidyl-3'-tyrosine (His-Tyr). Cu cation is bound by residues His314 and His315. Helical transmembrane passes span Met316–Val336 and Met360–Leu380. His398 provides a ligand contact to heme a3. Transmembrane regions (helical) follow at residues Phe399–Phe419, Ile434–Gly454, and Ile477–Phe497. His400 provides a ligand contact to Fe(II)-heme a. The tract at residues His564–Arg584 is disordered.

As to quaternary structure, associates with subunits II, III and IV to form cytochrome c oxidase. The 4 subunit cytochrome c oxidase forms a supercomplex with the menaquinol-cytochrome c reductase complex (cytochrome bc1). Cu(2+) serves as cofactor. Heme is required as a cofactor.

It localises to the cell membrane. It catalyses the reaction 4 Fe(II)-[cytochrome c] + O2 + 8 H(+)(in) = 4 Fe(III)-[cytochrome c] + 2 H2O + 4 H(+)(out). It participates in energy metabolism; oxidative phosphorylation. Its function is as follows. Cytochrome c oxidase is the component of the respiratory chain that catalyzes the reduction of oxygen to water. Subunits 1-3 form the functional core of the enzyme complex. CO I is the catalytic subunit of the enzyme. Electrons originating in cytochrome c are transferred via the copper A center of subunit 2 and heme A of subunit 1 to the bimetallic center formed by heme A3 and copper B. The protein is Cytochrome c oxidase subunit 1 (ctaD) of Corynebacterium glutamicum (strain ATCC 13032 / DSM 20300 / JCM 1318 / BCRC 11384 / CCUG 27702 / LMG 3730 / NBRC 12168 / NCIMB 10025 / NRRL B-2784 / 534).